The chain runs to 341 residues: 4-(gamma-L-glutamylamino)butanoyl-[BtrI acyl-carrier protein] monooxygenase BtrO (341 aa).

Belongs to the bacterial luciferase oxidoreductase family.

The enzyme catalyses 4-(gamma-L-glutamylamino)butanoyl-[BtrI ACP] + FMNH2 + O2 = 4-(gamma-L-glutamylamino)-(2S)-2-hydroxybutanoyl-[BtrI ACP] + FMN + H2O + H(+). It participates in antibiotic biosynthesis; butirosin biosynthesis. Monooxygenase component of a two-component system involved in the biosynthesis of the side chain of the aminoglycoside antibiotics in the biosynthetic pathway of butirosin. Together with BtrV, mediates hydroxylation of gamma-L-Glu-GABA-S-BtrI. Not able to hydroxylate free substrates, activation by the acyl-carrier protein is mandatory. Octanoyl-S-[BtrI acyl-carrier protein] is also accepted as substrate. In Niallia circulans (Bacillus circulans), this protein is 4-(gamma-L-glutamylamino)butanoyl-[BtrI acyl-carrier protein] monooxygenase BtrO (btrO).